Reading from the N-terminus, the 251-residue chain is 16S rRNA (guanine(1405)-N(7))-methyltransferase (251 aa).

Residues Y56, 81-83 (HAS), R87, A111, D131, 157-158 (DV), F173, and E182 each bind S-adenosyl-L-methionine.

This sequence belongs to the methyltransferase superfamily. Aminoglycoside resistance family.

The catalysed reaction is guanosine(1405) in 16S rRNA + S-adenosyl-L-methionine = N(7)-methylguanosine(1405) in 16S rRNA + S-adenosyl-L-homocysteine. Functionally, specifically methylates the N(7) position of guanine 1405 in 16S rRNA. Confers resistance to various aminoglycosides, including kanamycin, tobramycin, amikacin, arbekacin, gentamicin, sisomicin and isepamicin. This Serratia marcescens protein is 16S rRNA (guanine(1405)-N(7))-methyltransferase (rmtB).